The following is a 487-amino-acid chain: Schwannomin-interacting protein 1 (487 aa).

Disordered stretches follow at residues 1 to 74, 88 to 221, 236 to 260, and 308 to 354; these read MERS…VSAL, VIDE…PVPP, FREQ…NERE, and SGSD…SLDD. A compositionally biased stretch (basic and acidic residues) spans 14 to 27; the sequence is DQGKHSDSDYREDG. The segment covering 32–67 has biased composition (low complexity); the sequence is SDAGSSSSSSRASSQSNSTKVTPCSECKSSSSPGGS. The span at 92–106 shows a compositional bias: acidic residues; it reads WAPEEDGEEEEEEDE. Basic and acidic residues-rich tracts occupy residues 107–123 and 153–162; these read RDQR…REPG and HQHDPQDLRH. A Phosphoserine modification is found at serine 117. Polar residues predominate over residues 242–255; that stretch reads RNQGQARTNSTSAQ. A compositionally biased stretch (basic and acidic residues) spans 309–323; it reads GSDKDSDADDSKTET. The span at 324-335 shows a compositional bias: polar residues; the sequence is SLDTPLSPMSKQ. Residues 344-354 are compositionally biased toward acidic residues; the sequence is TTEEESESLDD. Residues 424-458 adopt a coiled-coil conformation; it reads IGQLQVIVNDLHSQIESLNEELVQLLLIRDELHTE.

Belongs to the SCHIP1 family. As to quaternary structure, homooligomer (via coiled coil domain). Interacts with NF2; the interaction is direct. Interacts with ANK3. As to expression, preferentially expressed in brain, skeletal muscles and heart. Also expressed in detected in pancreas, kidney, liver, lung, and placenta.

Its subcellular location is the cytoplasm. The protein is Schwannomin-interacting protein 1 of Homo sapiens (Human).